Consider the following 199-residue polypeptide: NAD(P)H dehydrogenase (quinone) (199 aa).

Residues 4 to 190 form the Flavodoxin-like domain; sequence VLVLYYSAYG…AGARYQGRMI (187 aa). FMN-binding positions include 10–15 and 78–80; these read SAYGHI and TRF. Y12 provides a ligand contact to NAD(+). Residue W98 coordinates substrate. Residues 113-119 and H134 contribute to the FMN site; that span reads SSATQHG.

This sequence belongs to the WrbA family. It depends on FMN as a cofactor.

The catalysed reaction is a quinone + NADH + H(+) = a quinol + NAD(+). It catalyses the reaction a quinone + NADPH + H(+) = a quinol + NADP(+). The chain is NAD(P)H dehydrogenase (quinone) from Nitrobacter winogradskyi (strain ATCC 25391 / DSM 10237 / CIP 104748 / NCIMB 11846 / Nb-255).